The primary structure comprises 68 residues: ATP synthase subunit c (68 aa).

A run of 2 helical transmembrane segments spans residues 5–25 (AAAI…GMIV) and 47–67 (FIGV…AFMV).

The protein belongs to the ATPase C chain family. As to quaternary structure, F-type ATPases have 2 components, F(1) - the catalytic core - and F(0) - the membrane proton channel. F(1) has five subunits: alpha(3), beta(3), gamma(1), delta(1), epsilon(1). F(0) has three main subunits: a(1), b(2) and c(10-14). The alpha and beta chains form an alternating ring which encloses part of the gamma chain. F(1) is attached to F(0) by a central stalk formed by the gamma and epsilon chains, while a peripheral stalk is formed by the delta and b chains.

The protein resides in the cell membrane. F(1)F(0) ATP synthase produces ATP from ADP in the presence of a proton or sodium gradient. F-type ATPases consist of two structural domains, F(1) containing the extramembraneous catalytic core and F(0) containing the membrane proton channel, linked together by a central stalk and a peripheral stalk. During catalysis, ATP synthesis in the catalytic domain of F(1) is coupled via a rotary mechanism of the central stalk subunits to proton translocation. Functionally, key component of the F(0) channel; it plays a direct role in translocation across the membrane. A homomeric c-ring of between 10-14 subunits forms the central stalk rotor element with the F(1) delta and epsilon subunits. In Oceanobacillus iheyensis (strain DSM 14371 / CIP 107618 / JCM 11309 / KCTC 3954 / HTE831), this protein is ATP synthase subunit c.